The following is a 920-amino-acid chain: Nitrate reductase [NADH] (920 aa).

The tract at residues 1 to 69 is disordered; it reads MAASVENRQF…DTSDDEEDEA (69 aa). Over residues 60-69 the composition is skewed to acidic residues; sequence DTSDDEEDEA. A Mo-molybdopterin-binding site is contributed by Cys185. In terms of domain architecture, Cytochrome b5 heme-binding spans 534–609; the sequence is SLTFTMSEVK…LEEYRVGELI (76 aa). Positions 569 and 592 each coordinate heme. The FAD-binding FR-type domain occupies 663–775; the sequence is REKIPCKLIS…KGPLGHIEYM (113 aa). FAD contacts are provided by residues 715–718, 732–736, Phe737, Phe744, 749–751, and Thr802; these read RAYT, LVKIY, and LMS.

The protein belongs to the nitrate reductase family. Homodimer. FAD serves as cofactor. Requires heme as cofactor. It depends on Mo-molybdopterin as a cofactor. In cortical cells of roots grown at low nitrate concentrations, in vascular tissues of roots at high nitrate concentrations and in root apex under both conditions.

The enzyme catalyses nitrite + NAD(+) + H2O = nitrate + NADH + H(+). Its function is as follows. Nitrate reductase is a key enzyme involved in the first step of nitrate assimilation in plants, fungi and bacteria. This chain is Nitrate reductase [NADH] (NIA), found in Cichorium intybus (Chicory).